The following is a 52-amino-acid chain: DNA-directed RNA polymerase subunit Rpo12 (52 aa).

Zn(2+)-binding residues include Cys-13, Cys-30, and Cys-33.

The protein belongs to the archaeal Rpo12/eukaryotic RPC10 RNA polymerase subunit family. As to quaternary structure, part of the RNA polymerase complex. It depends on Zn(2+) as a cofactor.

The protein resides in the cytoplasm. It carries out the reaction RNA(n) + a ribonucleoside 5'-triphosphate = RNA(n+1) + diphosphate. In terms of biological role, DNA-dependent RNA polymerase (RNAP) catalyzes the transcription of DNA into RNA using the four ribonucleoside triphosphates as substrates. In Pyrobaculum neutrophilum (strain DSM 2338 / JCM 9278 / NBRC 100436 / V24Sta) (Thermoproteus neutrophilus), this protein is DNA-directed RNA polymerase subunit Rpo12.